The sequence spans 143 residues: Large ribosomal subunit protein uL13 (143 aa).

Belongs to the universal ribosomal protein uL13 family. In terms of assembly, part of the 50S ribosomal subunit.

This protein is one of the early assembly proteins of the 50S ribosomal subunit, although it is not seen to bind rRNA by itself. It is important during the early stages of 50S assembly. This chain is Large ribosomal subunit protein uL13, found in Desulfitobacterium hafniense (strain Y51).